Here is a 320-residue protein sequence, read N- to C-terminus: Elongation factor Ts (320 aa).

The segment at 82 to 85 (TDFV) is involved in Mg(2+) ion dislocation from EF-Tu.

The protein belongs to the EF-Ts family.

The protein localises to the cytoplasm. In terms of biological role, associates with the EF-Tu.GDP complex and induces the exchange of GDP to GTP. It remains bound to the aminoacyl-tRNA.EF-Tu.GTP complex up to the GTP hydrolysis stage on the ribosome. This Flavobacterium johnsoniae (strain ATCC 17061 / DSM 2064 / JCM 8514 / BCRC 14874 / CCUG 350202 / NBRC 14942 / NCIMB 11054 / UW101) (Cytophaga johnsonae) protein is Elongation factor Ts.